Consider the following 69-residue polypeptide: MKISARNQLKGKVVSIENGSVNAIVHIDIGGGNVLSSTVSLAAVKELNLEVGKEAYAIIKATSVMVGVE.

The region spanning 2 to 68 (KISARNQLKG…IKATSVMVGV (67 aa)) is the Mop domain.

This sequence to C.pasteurianum MOP proteins.

Binds one mole of molybdenum per mole of protein and contains a pterin. This is Probable molybdenum-pterin-binding protein from Haemophilus influenzae (strain ATCC 51907 / DSM 11121 / KW20 / Rd).